Reading from the N-terminus, the 249-residue chain is Aspartate/glutamate leucyltransferase (249 aa).

The protein belongs to the R-transferase family. Bpt subfamily.

It localises to the cytoplasm. It catalyses the reaction N-terminal L-glutamyl-[protein] + L-leucyl-tRNA(Leu) = N-terminal L-leucyl-L-glutamyl-[protein] + tRNA(Leu) + H(+). The catalysed reaction is N-terminal L-aspartyl-[protein] + L-leucyl-tRNA(Leu) = N-terminal L-leucyl-L-aspartyl-[protein] + tRNA(Leu) + H(+). In terms of biological role, functions in the N-end rule pathway of protein degradation where it conjugates Leu from its aminoacyl-tRNA to the N-termini of proteins containing an N-terminal aspartate or glutamate. The polypeptide is Aspartate/glutamate leucyltransferase (Brucella canis (strain ATCC 23365 / NCTC 10854 / RM-666)).